The following is a 496-amino-acid chain: MADESETAVKPPAPPLPQMMEGNGNGHEHCSDCENEEDNSYNRGGLSPANDTGAKKKKKKQKKKKEKGSETDSAQDQPVKMNSLPAERIQEIQKAIELFSVGQGPAKTMEEASKRSYQFWDTQPVPKLGEVVNTHGPVEPDKDNIRQEPYTLPQGFTWDALDLGDRGVLKELYTLLNENYVEDDDNMFRFDYSPEFLLWALRPPGWLPQWHCGVRVVSSRKLVGFISAIPANIHIYDTEKKMVEINFLCVHKKLRSKRVAPVLIREITRRVHLEGIFQAVYTAGVVLPKPVGTCRYWHRSLNPRKLIEVKFSHLSRNMTMQRTMKLYRLPETPKTAGLRPMETKDIPVVHQLLTRYLKQFHLTPVMSQEEVEHWFYPQENIIDTFVVENANGEVTDFLSFYTLPSTIMNHPTHKSLKAAYSFYNVHTQTPLLDLMSDALVLAKMKGFDVFNALDLMENKTFLEKLKFGIGDGNLQYYLYNWKCPSMGAEKVGLVLQ.

A disordered region spans residues 1-82 (MADESETAVK…SAQDQPVKMN (82 aa)). Residues Ser-31 and Ser-47 each carry the phosphoserine modification. A compositionally biased stretch (basic residues) spans 55-66 (KKKKKKQKKKKE). A Phosphoserine modification is found at Ser-83. Tetradecanoyl-CoA-binding residues include Gln-118, Phe-119, Trp-120, Phe-247, Leu-248, Cys-249, Val-250, Ser-256, Arg-258, Val-259, and Ala-260.

It belongs to the NMT family. Heart, gut, kidney, liver and placenta.

It localises to the cytoplasm. Its subcellular location is the cytosol. The protein localises to the membrane. It carries out the reaction N-terminal glycyl-[protein] + tetradecanoyl-CoA = N-tetradecanoylglycyl-[protein] + CoA + H(+). The enzyme catalyses N-terminal glycyl-L-lysyl-[protein] + tetradecanoyl-CoA = N-terminal glycyl-(N(6)-tetradecanoyl)-L-lysyl-[protein] + CoA + H(+). In terms of biological role, adds a myristoyl group to the N-terminal glycine residue of certain cellular and viral proteins. Also able to mediate N-terminal lysine myristoylation of proteins: catalyzes myristoylation of ARF6 on both 'Gly-2' and 'Lys-3'. Lysine myristoylation is required to maintain ARF6 on membranes during the GTPase cycle. This Homo sapiens (Human) protein is Glycylpeptide N-tetradecanoyltransferase 1.